The following is a 560-amino-acid chain: Dihydroxy-acid dehydratase (560 aa).

C50 is a [2Fe-2S] cluster binding site. A Mg(2+)-binding site is contributed by D82. C123 is a [2Fe-2S] cluster binding site. Mg(2+) contacts are provided by D124 and K125. K125 bears the N6-carboxylysine mark. A [2Fe-2S] cluster-binding site is contributed by C195. E446 is a binding site for Mg(2+). Residue S472 is the Proton acceptor of the active site.

Belongs to the IlvD/Edd family. In terms of assembly, homodimer. [2Fe-2S] cluster serves as cofactor. Mg(2+) is required as a cofactor.

The enzyme catalyses (2R)-2,3-dihydroxy-3-methylbutanoate = 3-methyl-2-oxobutanoate + H2O. It catalyses the reaction (2R,3R)-2,3-dihydroxy-3-methylpentanoate = (S)-3-methyl-2-oxopentanoate + H2O. Its pathway is amino-acid biosynthesis; L-isoleucine biosynthesis; L-isoleucine from 2-oxobutanoate: step 3/4. It functions in the pathway amino-acid biosynthesis; L-valine biosynthesis; L-valine from pyruvate: step 3/4. Functionally, functions in the biosynthesis of branched-chain amino acids. Catalyzes the dehydration of (2R,3R)-2,3-dihydroxy-3-methylpentanoate (2,3-dihydroxy-3-methylvalerate) into 2-oxo-3-methylpentanoate (2-oxo-3-methylvalerate) and of (2R)-2,3-dihydroxy-3-methylbutanoate (2,3-dihydroxyisovalerate) into 2-oxo-3-methylbutanoate (2-oxoisovalerate), the penultimate precursor to L-isoleucine and L-valine, respectively. The sequence is that of Dihydroxy-acid dehydratase from Leptothrix cholodnii (strain ATCC 51168 / LMG 8142 / SP-6) (Leptothrix discophora (strain SP-6)).